The chain runs to 385 residues: Probable splicing factor YJU2B (385 aa).

A disordered region spans residues 1–26; that stretch reads MGERKGQNKYYPPDFNPEKHGSLNRY. Phosphoserine is present on Ser40. The stretch at 182-214 forms a coiled coil; that stretch reads LNSMLRRHFREKKKAMQEEEEKDQALQAKASLA. Positions 257–385 are disordered; the sequence is PSAQGPSASS…VADYSDSESE (129 aa). Low complexity predominate over residues 258 to 271; the sequence is SAQGPSASSSKASS. Phosphoserine is present on Ser306. Positions 359 to 373 are enriched in polar residues; it reads GSSQEDLLNPNTPNA.

Belongs to the CWC16 family.

The protein localises to the nucleus. In terms of biological role, may be involved in mRNA splicing. In Mus musculus (Mouse), this protein is Probable splicing factor YJU2B (Yju2b).